Here is a 431-residue protein sequence, read N- to C-terminus: Adenylosuccinate synthetase (431 aa).

GTP contacts are provided by residues glycine 12–lysine 18 and glycine 40–serine 42. The active-site Proton acceptor is the aspartate 13. Mg(2+) is bound by residues aspartate 13 and glycine 40. IMP-binding positions include aspartate 13 to lysine 16 and asparagine 38 to histidine 41. Histidine 41 (proton donor) is an active-site residue. The disordered stretch occupies residues glutamine 114–glycine 133. Residues glutamine 115–glutamate 125 are compositionally biased toward basic and acidic residues. The IMP site is built by threonine 130, arginine 144, glutamine 225, threonine 240, and arginine 304. Threonine 300–arginine 306 is a binding site for substrate. Residues arginine 306, cysteine 332–aspartate 334, and serine 414–glycine 416 each bind GTP.

The protein belongs to the adenylosuccinate synthetase family. In terms of assembly, homodimer. Mg(2+) is required as a cofactor.

Its subcellular location is the cytoplasm. It catalyses the reaction IMP + L-aspartate + GTP = N(6)-(1,2-dicarboxyethyl)-AMP + GDP + phosphate + 2 H(+). Its pathway is purine metabolism; AMP biosynthesis via de novo pathway; AMP from IMP: step 1/2. Its function is as follows. Plays an important role in the de novo pathway of purine nucleotide biosynthesis. Catalyzes the first committed step in the biosynthesis of AMP from IMP. The sequence is that of Adenylosuccinate synthetase from Pediococcus pentosaceus (strain ATCC 25745 / CCUG 21536 / LMG 10740 / 183-1w).